The sequence spans 200 residues: Transcriptional repressor NrdR (200 aa).

Residues 3–34 (CPFCQNPDTKVIDTRISDDGHSIRRRRECPNC) fold into a zinc finger. Residues 46-136 (LLVKKRSGNV…VYQNFEDLED (91 aa)) enclose the ATP-cone domain.

The protein belongs to the NrdR family. The cofactor is Zn(2+).

Negatively regulates transcription of bacterial ribonucleotide reductase nrd genes and operons by binding to NrdR-boxes. The sequence is that of Transcriptional repressor NrdR from Bifidobacterium animalis subsp. lactis (strain AD011).